The sequence spans 279 residues: Acetyl-coenzyme A carboxylase carboxyl transferase subunit beta (279 aa).

The CoA carboxyltransferase N-terminal domain maps to 27–279 (LFLACPYCGT…IVKLHHRTEI (253 aa)). Positions 31, 34, 49, and 52 each coordinate Zn(2+). The C4-type zinc finger occupies 31–52 (CPYCGTQMYNKQLGDYRVCAKC).

The protein belongs to the AccD/PCCB family. Acetyl-CoA carboxylase is a heterohexamer composed of biotin carboxyl carrier protein (AccB), biotin carboxylase (AccC) and two subunits each of ACCase subunit alpha (AccA) and ACCase subunit beta (AccD). It depends on Zn(2+) as a cofactor.

It is found in the cytoplasm. The enzyme catalyses N(6)-carboxybiotinyl-L-lysyl-[protein] + acetyl-CoA = N(6)-biotinyl-L-lysyl-[protein] + malonyl-CoA. The protein operates within lipid metabolism; malonyl-CoA biosynthesis; malonyl-CoA from acetyl-CoA: step 1/1. Functionally, component of the acetyl coenzyme A carboxylase (ACC) complex. Biotin carboxylase (BC) catalyzes the carboxylation of biotin on its carrier protein (BCCP) and then the CO(2) group is transferred by the transcarboxylase to acetyl-CoA to form malonyl-CoA. The chain is Acetyl-coenzyme A carboxylase carboxyl transferase subunit beta from Leuconostoc citreum (strain KM20).